A 419-amino-acid polypeptide reads, in one-letter code: L-rhamnose isomerase (419 aa).

Mn(2+) contacts are provided by H262, D294, and D296.

The protein belongs to the rhamnose isomerase family. As to quaternary structure, homotetramer. The cofactor is Mn(2+).

The protein resides in the cytoplasm. The enzyme catalyses L-rhamnopyranose = L-rhamnulose. It participates in carbohydrate degradation; L-rhamnose degradation; glycerone phosphate from L-rhamnose: step 1/3. Catalyzes the interconversion of L-rhamnose and L-rhamnulose. This Escherichia fergusonii (strain ATCC 35469 / DSM 13698 / CCUG 18766 / IAM 14443 / JCM 21226 / LMG 7866 / NBRC 102419 / NCTC 12128 / CDC 0568-73) protein is L-rhamnose isomerase.